The primary structure comprises 241 residues: Beta-nerve growth factor (241 aa).

Positions 1-18 are cleaved as a signal peptide; the sequence is MSMLFYTLITAFLIGVQA. A propeptide spanning residues 19 to 121 is cleaved from the precursor; it reads EPYTDSNVPE…PFNRTHRSKR (103 aa). Asparagine 69 and asparagine 114 each carry an N-linked (GlcNAc...) asparagine glycan. 3 disulfide bridges follow: cysteine 136/cysteine 201, cysteine 179/cysteine 229, and cysteine 189/cysteine 231. A 1-acyl-sn-glycero-3-phospho-(1D-myo-inositol) contacts are provided by arginine 171, tyrosine 173, and lysine 209. Arginine 171 is a binding site for a 1-acyl-sn-glycero-3-phospho-L-serine. Lysine 209 contacts a 1-acyl-sn-glycero-3-phospho-L-serine.

This sequence belongs to the NGF-beta family. Homodimer. The homodimer interacts with a single NTRK1 chain. The homodimer interacts with a single NGFR chain. The NGF dimer interacts with a single SORCS2 chain (via extracellular domain). The NGF precursor (proNGF) binds to a receptor complex formed by SORT1 and NGFR, which leads to NGF endocytosis. Both mature NGF and the immature NGF precursor (proNGF) interact with SORCS2 and with the heterodimer formed by SORCS2 and NGFR (via extracellular domains). The NGF precursor (proNGF) has much higher affinity for SORCS2 than mature NGF. The NGF precursor (proNGF) has much higher affinity for SORT1 than mature NGF. Interacts with ADAM10 in a divalent cation-dependent manner. Interacts with SORCS3. In terms of tissue distribution, detected in submaxillary gland (at protein level). Highly expressed in male submaxillary gland. Levels are much lower in female submaxillary gland.

The protein resides in the secreted. The protein localises to the endosome lumen. Nerve growth factor is important for the development and maintenance of the sympathetic and sensory nervous systems. Extracellular ligand for the NTRK1 and NGFR receptors, activates cellular signaling cascades to regulate neuronal proliferation, differentiation and survival. The immature NGF precursor (proNGF) functions as a ligand for the heterodimeric receptor formed by SORCS2 and NGFR, and activates cellular signaling cascades that lead to inactivation of RAC1 and/or RAC2, reorganization of the actin cytoskeleton and neuronal growth cone collapse. In contrast to mature NGF, the precursor form (proNGF) promotes neuronal apoptosis (in vitro). Inhibits metalloproteinase-dependent proteolysis of platelet glycoprotein VI. Binds lysophosphatidylinositol and lysophosphatidylserine between the two chains of the homodimer. The lipid-bound form promotes histamine relase from mast cells, contrary to the lipid-free form. The chain is Beta-nerve growth factor (Ngf) from Mus musculus (Mouse).